The following is a 158-amino-acid chain: C-type lectin lectoxin-Thr1 (158 aa).

A signal peptide spans Met-1–Gly-23. 3 disulfide bridges follow: Cys-26–Cys-37, Cys-54–Cys-154, and Cys-129–Cys-146. The C-type lectin domain maps to Leu-33 to Lys-155. Residues Glu-119 to Asn-121 carry the Mannose-binding motif. Ca(2+) is bound by residues Glu-127, Asn-142, and Asp-143.

This sequence belongs to the true venom lectin family. As to expression, expressed by the venom gland.

The protein localises to the secreted. In terms of biological role, mannose-binding lectin which recognizes specific carbohydrate structures and agglutinates a variety of animal cells by binding to cell-surface glycoproteins and glycolipids. May be a calcium-dependent lectin. In Thrasops jacksonii (Jackson's black tree snake), this protein is C-type lectin lectoxin-Thr1.